The chain runs to 652 residues: MLAHGSNDYGVSLKGNKTGSSPSKASSLNWNEPHTLNEQNTYCYCGKDRNLRFPDLQCSVCLNMFHLSCLSPPCTSMMGFSTNYQFVCKHCTEDGFERFERGVSAWKAITATAMANLVVKRYVETNPDVPVDSFNAEKMRNFQANTYFFKKKEDLIPFIEEHWQLLCPDREKVQTWQATLGSCLVANRDTYRAKDETMRNQNSEYALNNPNLFDFRSGYIFPFQRVGATVPKKRLVETETPPPSSSKLKEDYKDSKREMKRSNTPWSNASIKKNEVPTVPIRYKPPPWRDSDFETVPKLPIFYPNSSSPNFFSLSEIPFNRRGFRYSPCEAAKDLPNVMYREIELPPFTSRINWHDISTPVFIDHSALCATVEKGFRMARSNVFMTSGEWYFEIKIEKGGGDDGAHVRIGVSRREAPLDAPVGYDAYSYGLRDLGGQKVHMSRPRNFMDSFGTGDIIGLHISLPKPSFAQHTTLPSCHDRIPIRYKGQLYFEQPDYVPSKMMDELMIPSKHNRYIDLPYIPGSFIKVYKNGSYMGTAFENLLDFNPPNSINSNHYSFDDGSLGYYPSISMYGGGIARFQFGPQFSHRPLVLGSNVRPVSERYNEQIAEDVLCDILDEIDYAEDPNTSSVTIDVPQEPNAGITIIPEIKDITE.

A disordered region spans residues 1–32 (MLAHGSNDYGVSLKGNKTGSSPSKASSLNWNE). The span at 15–32 (GNKTGSSPSKASSLNWNE) shows a compositional bias: polar residues. A PHD-type zinc finger spans residues 40-94 (NTYCYCGKDRNLRFPDLQCSVCLNMFHLSCLSPPCTSMMGFSTNYQFVCKHCTED). Residues Cys-43, Cys-45, Cys-58, Cys-61, His-66, Cys-69, Cys-88, and Cys-91 each contribute to the Zn(2+) site. The disordered stretch occupies residues 234 to 270 (RLVETETPPPSSSKLKEDYKDSKREMKRSNTPWSNAS). The span at 247-261 (KLKEDYKDSKREMKR) shows a compositional bias: basic and acidic residues. Residues 330–519 (EAAKDLPNVM…KHNRYIDLPY (190 aa)) form the B30.2/SPRY domain.

This sequence belongs to the cclA family. As to quaternary structure, component of the Set1 complex composed of ash2, sdc1, set1, shg1, spp1, swd1, swd2 and swd3. Component of the Lid2 complex composed of ash2, jmj3, lid2, sdc1 and snt2.

The protein resides in the nucleus. In terms of biological role, component of the COMPASS (Set1C) complex that specifically mono-, di- and trimethylates histone H3 to form H3K4me1/2/3, which subsequently plays a role in telomere length maintenance and transcription elongation regulation. Regulates MAPK pathway and sporulation through H3K4 methylation. The protein is Set1 complex component ash2 of Schizosaccharomyces pombe (strain 972 / ATCC 24843) (Fission yeast).